Reading from the N-terminus, the 35-residue chain is Z-limacoditoxin(1)-Dv1 (35 aa).

The first 22 residues, 1 to 22, serve as a signal peptide directing secretion; it reads MKKTFLPIFLVILLASYALANP. Gln-23 is modified (pyrrolidone carboxylic acid). Proline amide is present on Pro-32.

The protein belongs to the limacoditoxin-1 (ACP-like) family. As to expression, expressed by the venom secretory cell of the spine. The spine is a cuticular structure containing a single large nucleated venom-secreting cell at its base. It is an independent unit capable of producing, storing and injecting venom. On the back of D.vulnerans caterpillars, spines are grouped together by 50 to 100 to form scoli, of which there are eight in D.vulnerans.

The protein localises to the secreted. Potently activates insect G protein-coupled receptor. It activates the ACP receptor (ACPR) from the mosquito A.aegypti (EC(50)=0.55 nM) with a potency comparable to that of the endogenous ligand. Has no activity on receptors of the closely related neuropeptides adipokinetic hormone and corazonin. In vivo, does not reveal any observable effects when injected into crickets (A.domesticus). Does not induce increase in intracellular calcium in mouse DRG neurons, suggesting that it does not induce pain. The chain is Z-limacoditoxin(1)-Dv1 from Doratifera vulnerans (Mottled cup moth).